The primary structure comprises 505 residues: Maturase K (505 aa).

The protein belongs to the intron maturase 2 family. MatK subfamily.

The protein localises to the plastid. The protein resides in the chloroplast. Its function is as follows. Usually encoded in the trnK tRNA gene intron. Probably assists in splicing its own and other chloroplast group II introns. In Nuphar advena (Common spatterdock), this protein is Maturase K.